The sequence spans 846 residues: FNIP repeat-containing protein DDB_G0289381 (846 aa).

Residues 1 to 11 (MKLLSFKKKPS) show a composition bias toward basic residues. Positions 1–39 (MKLLSFKKKPSLTKSQSCPDKLKNLKEQQKDPKNGANYD) are disordered. A compositionally biased stretch (basic and acidic residues) spans 20-33 (DKLKNLKEQQKDPK). 4 FNIP repeats span residues 159-193 (IPNH…FGEK), 194-239 (FNQV…FGNN), 240-283 (FDQI…FQEN), and 284-325 (FNQP…YGGD). Positions 362–384 (SSISLDISGGGSGSGSGVNSTTT) are disordered. FNIP repeat units follow at residues 458-500 (FQQL…FGDG), 501-546 (FNQQ…FGKS), and 654-693 (FNQS…MFNK). The interval 702-734 (SNNNNENNNENNNENNNENNNENNNENNNNTNS) is disordered. Residues 702–734 (SNNNNENNNENNNENNNENNNENNNENNNNTNS) are a coiled coil.

The protein is FNIP repeat-containing protein DDB_G0289381 of Dictyostelium discoideum (Social amoeba).